We begin with the raw amino-acid sequence, 352 residues long: Selenide, water dikinase (352 aa).

The active site involves cysteine 23. ATP contacts are provided by residues lysine 26 and 54-56 (SRD). Aspartate 57 lines the Mg(2+) pocket. Residues aspartate 74, aspartate 97, and 145 to 147 (GHS) contribute to the ATP site. Aspartate 97 is a Mg(2+) binding site. Residue aspartate 233 participates in Mg(2+) binding.

Belongs to the selenophosphate synthase 1 family. Class I subfamily. In terms of assembly, homodimer. Mg(2+) is required as a cofactor.

The enzyme catalyses hydrogenselenide + ATP + H2O = selenophosphate + AMP + phosphate + 2 H(+). Functionally, synthesizes selenophosphate from selenide and ATP. This Shewanella baltica (strain OS185) protein is Selenide, water dikinase.